Consider the following 1067-residue polypeptide: Protein CLEC16A homolog (1067 aa).

In terms of domain architecture, FPL spans 50–199 (LRCIAEILIW…AVRTISLNVY (150 aa)). A helical membrane pass occupies residues 333–353 (SIVALFLLSLVFLVVSHAPLV). Positions 409–418 (SSSSYALSED) are enriched in low complexity. Disordered stretches follow at residues 409–434 (SSSS…LDSQ), 837–861 (ASSS…PMFS), 876–993 (SNSA…SRSH), and 1037–1067 (QSSE…IETV). Residues 421–432 (VESSSPATTELD) are compositionally biased toward polar residues. Residues 876 to 888 (SNSAGVSRTQMAP) show a composition bias toward polar residues. Over residues 917–926 (RADHSDRERS) the composition is skewed to basic and acidic residues. Positions 927-947 (PSVSMGSHSSSQSRENSQPRS) are enriched in low complexity. Over residues 951–974 (RSRESSPRMPRPRSEEIPLEDFQH) the composition is skewed to basic and acidic residues. A compositionally biased stretch (polar residues) spans 975 to 993 (SRNNSPHSRGNPSPASRSH). Basic and acidic residues predominate over residues 1057-1067 (EGRRRGAIETV).

It belongs to the CLEC16A/gop-1 family. As to quaternary structure, interacts with the class C Vps-HOPS complex components; Car, Dor and Vps16a.

It is found in the cytoplasmic vesicle. Its subcellular location is the autophagosome membrane. The protein localises to the late endosome membrane. It localises to the golgi apparatus membrane. Required for mitophagy, autophagy and endosome maturation, possibly by acting in multiple membrane trafficking pathways. Required for endosome trafficking and maturation. Functions with the class C Vps-HOPS complex member Vps16a to promote endosomal maturation into degradative late endosomes and lysosomes. In response to starvation, functions at an early stage of autophagy to promote autophagosome growth and efficient autophagy. Essential for the recruitment of lva-positive Golgi elements to autophagosomes. Likely to function by promoting membrane traffic from the Golgi complex to the developing autophagosomes. Also regulates synaptic growth at the neuromuscular junctions (NMJ) by down-regulating BMP signaling. This chain is Protein CLEC16A homolog, found in Drosophila melanogaster (Fruit fly).